The primary structure comprises 417 residues: Brevican core protein (417 aa).

The signal sequence occupies residues 1-22; sequence MAPLFLPLLIALALAPGPTASA. The Ig-like V-type domain maps to 23 to 155; the sequence is DVLEGDSSED…SSDAVEVKVK (133 aa). Intrachain disulfides connect cysteine 57-cysteine 137, cysteine 179-cysteine 250, and cysteine 203-cysteine 224. N-linked (GlcNAc...) asparagine glycosylation occurs at asparagine 130. Link domains follow at residues 157–252 and 257–354; these read VVFL…YCYA and GELF…YCFR. Asparagine 267 is a glycosylation site (N-linked (GlcNAc...) asparagine). 2 disulfide bridges follow: cysteine 277/cysteine 352 and cysteine 301/cysteine 322. Asparagine 337 carries N-linked (GlcNAc...) asparagine glycosylation.

It belongs to the aggrecan/versican proteoglycan family. As to expression, central nervous system.

It is found in the secreted. The protein localises to the extracellular space. The protein resides in the extracellular matrix. May play a role in the terminally differentiating and the adult nervous system during postnatal development. Could stabilize interactions between hyaluronan (HA) and brain proteoglycans. This Felis catus (Cat) protein is Brevican core protein (BCAN).